We begin with the raw amino-acid sequence, 184 residues long: Adenine phosphoribosyltransferase (184 aa).

Belongs to the purine/pyrimidine phosphoribosyltransferase family. In terms of assembly, homodimer.

The protein localises to the cytoplasm. It carries out the reaction AMP + diphosphate = 5-phospho-alpha-D-ribose 1-diphosphate + adenine. It participates in purine metabolism; AMP biosynthesis via salvage pathway; AMP from adenine: step 1/1. In terms of biological role, catalyzes a salvage reaction resulting in the formation of AMP, that is energically less costly than de novo synthesis. This is Adenine phosphoribosyltransferase from Shewanella putrefaciens (strain CN-32 / ATCC BAA-453).